The sequence spans 178 residues: Inorganic pyrophosphatase (178 aa).

Residues lysine 31, arginine 45, and tyrosine 57 each coordinate substrate. Positions 67, 72, and 104 each coordinate Mg(2+). Tyrosine 141 is a binding site for substrate.

It belongs to the PPase family. As to quaternary structure, homohexamer. The cofactor is Mg(2+).

Its subcellular location is the cytoplasm. It carries out the reaction diphosphate + H2O = 2 phosphate + H(+). Its function is as follows. Catalyzes the hydrolysis of inorganic pyrophosphate (PPi) forming two phosphate ions. The protein is Inorganic pyrophosphatase of Leptospira interrogans serogroup Icterohaemorrhagiae serovar copenhageni (strain Fiocruz L1-130).